A 302-amino-acid chain; its full sequence is Protein KTI12 homolog (302 aa).

8-15 is an ATP binding site; sequence GQPCSGKS. Positions 260 to 273 are calmodulin-binding; sequence LRRTFVKLMGQSSL.

The protein belongs to the KTI12 family. In terms of assembly, interacts with the elongator complex. Binds to calmodulin in a calcium-dependent manner. Expressed in roots, hypocotyls, cotyledons, shoot apices, stems, inflorescence apices, leaves and flowers.

The protein resides in the cytoplasm. Its subcellular location is the nucleus. Functionally, elongator complex-associated factor that is not a structural subunit but rather transiently contacts the complex. Regulates both meristem activity and organ growth; acts as a positive regulator of adaxial leaf patterning by modulating both cell division and differentiation. Required for an early step in synthesis of 5-carbamoylmethyl (ncm5) groups present on uridines (ncm5U) at the wobble position in tRNA. This is Protein KTI12 homolog from Arabidopsis thaliana (Mouse-ear cress).